Here is a 380-residue protein sequence, read N- to C-terminus: Probable peptidoglycan glycosyltransferase FtsW (380 aa).

The next 10 helical transmembrane spans lie at 14-34, 52-72, 79-99, 112-131, 141-161, 162-182, 188-208, 268-288, 304-324, and 341-361; these read LLWCTLCLLLIGVTMVTSSSI, ILYLVILFFIFKIFLDVPISF, IILLISISTLLLVLIIGNSIH, MQPSELSKLAMFCYLSNYLS, FGGFLKPIIIISFPLILLLVE, PDLGTTIVILLTTLSLLFISG, FIPTILIIVVTTTVLIIKSPY, IIGEELGYIGACTILFMIFFI, IFFSGYFAFSIGLWLIFQTLI, and PLISYGGSSLIIVSIAIIILI.

The protein belongs to the SEDS family. FtsW subfamily.

The protein localises to the cell membrane. The enzyme catalyses [GlcNAc-(1-&gt;4)-Mur2Ac(oyl-L-Ala-gamma-D-Glu-L-Lys-D-Ala-D-Ala)](n)-di-trans,octa-cis-undecaprenyl diphosphate + beta-D-GlcNAc-(1-&gt;4)-Mur2Ac(oyl-L-Ala-gamma-D-Glu-L-Lys-D-Ala-D-Ala)-di-trans,octa-cis-undecaprenyl diphosphate = [GlcNAc-(1-&gt;4)-Mur2Ac(oyl-L-Ala-gamma-D-Glu-L-Lys-D-Ala-D-Ala)](n+1)-di-trans,octa-cis-undecaprenyl diphosphate + di-trans,octa-cis-undecaprenyl diphosphate + H(+). Its pathway is cell wall biogenesis; peptidoglycan biosynthesis. Functionally, peptidoglycan polymerase that is essential for cell division. This Buchnera aphidicola subsp. Baizongia pistaciae (strain Bp) protein is Probable peptidoglycan glycosyltransferase FtsW.